We begin with the raw amino-acid sequence, 357 residues long: O-methyltransferase 9 (357 aa).

S-adenosyl-L-methionine is bound by residues Gly-200, Asp-224, Asn-249, Phe-250, and Lys-263. His-267 serves as the catalytic Proton acceptor.

The protein belongs to the class I-like SAM-binding methyltransferase superfamily. Cation-independent O-methyltransferase family. COMT subfamily.

The catalysed reaction is (3,5-dichloro-2,4,6-trihydroxyphenyl)hexan-1-one + S-adenosyl-L-methionine = 1-(3,5-dichloro-2,6-dihydroxy-4-methoxyphenyl)hexan-1-one + S-adenosyl-L-homocysteine + H(+). The protein is O-methyltransferase 9 (omt9) of Dictyostelium discoideum (Social amoeba).